The chain runs to 99 residues: Large ribosomal subunit protein uL23 (99 aa).

This sequence belongs to the universal ribosomal protein uL23 family. Part of the 50S ribosomal subunit. Contacts protein L29, and trigger factor when it is bound to the ribosome.

In terms of biological role, one of the early assembly proteins it binds 23S rRNA. One of the proteins that surrounds the polypeptide exit tunnel on the outside of the ribosome. Forms the main docking site for trigger factor binding to the ribosome. In Blochmanniella floridana, this protein is Large ribosomal subunit protein uL23.